Here is a 127-residue protein sequence, read N- to C-terminus: Large ribosomal subunit protein bL20 (127 aa).

This sequence belongs to the bacterial ribosomal protein bL20 family.

Its function is as follows. Binds directly to 23S ribosomal RNA and is necessary for the in vitro assembly process of the 50S ribosomal subunit. It is not involved in the protein synthesizing functions of that subunit. The protein is Large ribosomal subunit protein bL20 of Streptomyces griseus subsp. griseus (strain JCM 4626 / CBS 651.72 / NBRC 13350 / KCC S-0626 / ISP 5235).